We begin with the raw amino-acid sequence, 61 residues long: uncharacterized protein (61 aa).

This is an uncharacterized protein from Autographa californica nuclear polyhedrosis virus (AcMNPV).